A 475-amino-acid chain; its full sequence is Ribulose bisphosphate carboxylase large chain (475 aa).

Residues 1–2 constitute a propeptide that is removed on maturation; sequence MS. At proline 3 the chain carries N-acetylproline. N6,N6,N6-trimethyllysine is present on lysine 14. Residues asparagine 123 and threonine 173 each coordinate substrate. Lysine 175 functions as the Proton acceptor in the catalytic mechanism. Residue lysine 177 coordinates substrate. Lysine 201, aspartate 203, and glutamate 204 together coordinate Mg(2+). Lysine 201 carries the N6-carboxylysine modification. Histidine 294 (proton acceptor) is an active-site residue. Residues arginine 295, histidine 327, and serine 379 each contribute to the substrate site.

It belongs to the RuBisCO large chain family. Type I subfamily. As to quaternary structure, heterohexadecamer of 8 large chains and 8 small chains; disulfide-linked. The disulfide link is formed within the large subunit homodimers. The cofactor is Mg(2+). Post-translationally, the disulfide bond which can form in the large chain dimeric partners within the hexadecamer appears to be associated with oxidative stress and protein turnover.

The protein resides in the plastid. Its subcellular location is the chloroplast. It carries out the reaction 2 (2R)-3-phosphoglycerate + 2 H(+) = D-ribulose 1,5-bisphosphate + CO2 + H2O. The catalysed reaction is D-ribulose 1,5-bisphosphate + O2 = 2-phosphoglycolate + (2R)-3-phosphoglycerate + 2 H(+). Its function is as follows. RuBisCO catalyzes two reactions: the carboxylation of D-ribulose 1,5-bisphosphate, the primary event in carbon dioxide fixation, as well as the oxidative fragmentation of the pentose substrate in the photorespiration process. Both reactions occur simultaneously and in competition at the same active site. The polypeptide is Ribulose bisphosphate carboxylase large chain (Picea abies (Norway spruce)).